The sequence spans 283 residues: Elongation factor Ts (283 aa).

Positions 80–83 are involved in Mg(2+) ion dislocation from EF-Tu; the sequence is TDFV.

Belongs to the EF-Ts family.

It is found in the cytoplasm. Functionally, associates with the EF-Tu.GDP complex and induces the exchange of GDP to GTP. It remains bound to the aminoacyl-tRNA.EF-Tu.GTP complex up to the GTP hydrolysis stage on the ribosome. This Haemophilus influenzae (strain 86-028NP) protein is Elongation factor Ts.